We begin with the raw amino-acid sequence, 374 residues long: tRNA-specific 2-thiouridylase MnmA (374 aa).

Residues 12–19 (GMSGGVDS) and Met38 contribute to the ATP site. The interaction with target base in tRNA stretch occupies residues 98–100 (NPD). Cys103 functions as the Nucleophile in the catalytic mechanism. A disulfide bridge links Cys103 with Cys202. Gly128 serves as a coordination point for ATP. Residues 152–154 (KDQ) form an interaction with tRNA region. Residue Cys202 is the Cysteine persulfide intermediate of the active site. The interaction with tRNA stretch occupies residues 316–317 (RY).

Belongs to the MnmA/TRMU family.

It is found in the cytoplasm. It carries out the reaction S-sulfanyl-L-cysteinyl-[protein] + uridine(34) in tRNA + AH2 + ATP = 2-thiouridine(34) in tRNA + L-cysteinyl-[protein] + A + AMP + diphosphate + H(+). Catalyzes the 2-thiolation of uridine at the wobble position (U34) of tRNA, leading to the formation of s(2)U34. This is tRNA-specific 2-thiouridylase MnmA from Vibrio vulnificus (strain CMCP6).